The primary structure comprises 186 residues: HGPRTase-like protein 3 (186 aa).

The protein belongs to the purine/pyrimidine phosphoribosyltransferase family. Archaeal HPRT subfamily.

In terms of biological role, may catalyze a purine salvage reaction, the substrate is unknown. This chain is HGPRTase-like protein 3, found in Haloterrigena turkmenica (strain ATCC 51198 / DSM 5511 / JCM 9101 / NCIMB 13204 / VKM B-1734 / 4k) (Halococcus turkmenicus).